Here is a 205-residue protein sequence, read N- to C-terminus: Leucyl/phenylalanyl-tRNA--protein transferase (205 aa).

Belongs to the L/F-transferase family.

Its subcellular location is the cytoplasm. It carries out the reaction N-terminal L-lysyl-[protein] + L-leucyl-tRNA(Leu) = N-terminal L-leucyl-L-lysyl-[protein] + tRNA(Leu) + H(+). The catalysed reaction is N-terminal L-arginyl-[protein] + L-leucyl-tRNA(Leu) = N-terminal L-leucyl-L-arginyl-[protein] + tRNA(Leu) + H(+). The enzyme catalyses L-phenylalanyl-tRNA(Phe) + an N-terminal L-alpha-aminoacyl-[protein] = an N-terminal L-phenylalanyl-L-alpha-aminoacyl-[protein] + tRNA(Phe). Its function is as follows. Functions in the N-end rule pathway of protein degradation where it conjugates Leu, Phe and, less efficiently, Met from aminoacyl-tRNAs to the N-termini of proteins containing an N-terminal arginine or lysine. The polypeptide is Leucyl/phenylalanyl-tRNA--protein transferase (Mesorhizobium japonicum (strain LMG 29417 / CECT 9101 / MAFF 303099) (Mesorhizobium loti (strain MAFF 303099))).